The sequence spans 131 residues: MTTKRKPYVRPMTSTWWKKLPFYRFYMLREGTAVPAVWFSIELIFALFALKNGPEAWAGFVDFLQNPVIVIINLITLTAALLHTKTWFELAPKAANIIVKDEKMGPEPIIKSLWAVTVVATIVILFVALYW.

3 helical membrane passes run Glu30–Leu50, Trp57–Leu77, and Ile109–Leu129.

Belongs to the FrdC family. Part of an enzyme complex containing four subunits: a flavoprotein (FrdA), an iron-sulfur protein (FrdB), and two hydrophobic anchor proteins (FrdC and FrdD).

It is found in the cell inner membrane. In terms of biological role, two distinct, membrane-bound, FAD-containing enzymes are responsible for the catalysis of fumarate and succinate interconversion; fumarate reductase is used in anaerobic growth, and succinate dehydrogenase is used in aerobic growth. Anchors the catalytic components of the fumarate reductase complex to the cell inner membrane, binds quinones. The protein is Fumarate reductase subunit C of Shigella flexneri.